A 154-amino-acid polypeptide reads, in one-letter code: Myoglobin (154 aa).

The Globin domain maps to 2 to 148 (GLSEAEWQLV…FRKDIAAKYK (147 aa)). Serine 4 bears the Phosphoserine mark. Residue histidine 65 participates in nitrite binding. Histidine 65 is a binding site for O2. At threonine 68 the chain carries Phosphothreonine. A heme b-binding site is contributed by histidine 94.

It belongs to the globin family. Monomeric.

It localises to the cytoplasm. Its subcellular location is the sarcoplasm. It carries out the reaction Fe(III)-heme b-[protein] + nitric oxide + H2O = Fe(II)-heme b-[protein] + nitrite + 2 H(+). The enzyme catalyses H2O2 + AH2 = A + 2 H2O. Monomeric heme protein which primary function is to store oxygen and facilitate its diffusion within muscle tissues. Reversibly binds oxygen through a pentacoordinated heme iron and enables its timely and efficient release as needed during periods of heightened demand. Depending on the oxidative conditions of tissues and cells, and in addition to its ability to bind oxygen, it also has a nitrite reductase activity whereby it regulates the production of bioactive nitric oxide. Under stress conditions, like hypoxia and anoxia, it also protects cells against reactive oxygen species thanks to its pseudoperoxidase activity. In Ziphius cavirostris (Cuvier's beaked whale), this protein is Myoglobin (MB).